The following is a 493-amino-acid chain: Proline--tRNA ligase (493 aa).

It belongs to the class-II aminoacyl-tRNA synthetase family. ProS type 3 subfamily. In terms of assembly, homodimer.

Its subcellular location is the cytoplasm. It carries out the reaction tRNA(Pro) + L-proline + ATP = L-prolyl-tRNA(Pro) + AMP + diphosphate. Catalyzes the attachment of proline to tRNA(Pro) in a two-step reaction: proline is first activated by ATP to form Pro-AMP and then transferred to the acceptor end of tRNA(Pro). The protein is Proline--tRNA ligase of Porphyromonas gingivalis (strain ATCC 33277 / DSM 20709 / CIP 103683 / JCM 12257 / NCTC 11834 / 2561).